We begin with the raw amino-acid sequence, 66 residues long: Ranalexin (66 aa).

An N-terminal signal peptide occupies residues Met1–Ser20. The propeptide at Leu21–Glu44 is small acidic peptide. A disulfide bridge links Cys60 with Cys66.

This sequence belongs to the frog skin active peptide (FSAP) family. Brevinin subfamily. In terms of tissue distribution, expressed by the skin dorsal glands.

The protein resides in the secreted. In terms of biological role, potent microbicidal activity, active against S.aureus and E.coli. It also acts as a membrane-disruptive agent at higher concentrations. This chain is Ranalexin, found in Aquarana catesbeiana (American bullfrog).